Reading from the N-terminus, the 77-residue chain is Dermatoxin-B1 (77 aa).

Residues 1-22 form the signal peptide; that stretch reads MAFLKKSLFLVLFLGLVPLSLC. Residues 23–42 constitute a propeptide that is removed on maturation; the sequence is ESEKREGENEEEQEDDQSEE. The segment at 24–45 is disordered; that stretch reads SEKREGENEEEQEDDQSEEKRS. The segment covering 30-40 has biased composition (acidic residues); that stretch reads ENEEEQEDDQS. Glutamine amide is present on Gln-76.

Belongs to the frog skin active peptide (FSAP) family. Dermatoxin subfamily. In terms of tissue distribution, highest expression in skin and to a lesser extent in brain and intestine.

It is found in the secreted. The protein localises to the target cell membrane. Its function is as follows. Possesses a potent antimicrobial activity against Gram-positive bacteria B.megaterium, C.glutamicum and S.aureus and mollicutes A.laidlawii and S.melliferum. Less active against Gram-negative bacteria B.cepacia, P.aeruginosa, S.typhimurium and S.meliloti. Probably acts by disturbing membrane functions with its amphipathic structure. This is Dermatoxin-B1 from Phyllomedusa bicolor (Two-colored leaf frog).